The following is a 426-amino-acid chain: Serine protease HTRA2, mitochondrial (426 aa).

Residues Met-1–Arg-30 constitute a mitochondrion transit peptide. The segment at Arg-30–His-59 is disordered. Residues Val-31–Gly-78 constitute a propeptide that is removed on maturation. Low complexity predominate over residues Gln-42–Glu-54. A helical membrane pass occupies residues Leu-68 to Ile-86. The short motif at Ala-79 to Ser-82 is the IAP-binding element. Residues Ser-143–Leu-306 are serine protease. Catalysis depends on charge relay system residues His-161, Asp-193, and Ser-270. In terms of domain architecture, PDZ spans Met-329–Val-414.

This sequence belongs to the peptidase S1C family. As to quaternary structure, interacts with th/DIAP1 (via BIR 2 domain).

Its subcellular location is the mitochondrion intermembrane space. The protein localises to the mitochondrion membrane. The catalysed reaction is Cleavage of non-polar aliphatic amino-acids at the P1 position, with a preference for Val, Ile and Met. At the P2 and P3 positions, Arg is selected most strongly with a secondary preference for other hydrophilic residues.. Its function is as follows. Serine protease that shows proteolytic activity against a non-specific substrate beta-casein. Promotes or induces cell death either by direct binding to and inhibition of BIRC proteins (also called inhibitor of apoptosis proteins, IAPs), leading to an increase in caspase activity, or by a BIRC inhibition-independent, caspase-independent and serine protease activity-dependent mechanism. Can antagonize antiapoptotic activity of th/Diap1 by directly inducing the degradation of th/Diap1. The polypeptide is Serine protease HTRA2, mitochondrial (Drosophila ananassae (Fruit fly)).